The following is a 122-amino-acid chain: Chorismate mutase AroH (122 aa).

In terms of domain architecture, Chorismate mutase aroH-type spans 2 to 120 (VRGIRGAITV…AVRLRPDLES (119 aa)). Prephenate is bound by residues R6, R89, and Y107.

As to quaternary structure, homotrimer.

The protein localises to the cytoplasm. It catalyses the reaction chorismate = prephenate. It participates in metabolic intermediate biosynthesis; prephenate biosynthesis; prephenate from chorismate: step 1/1. Its activity is regulated as follows. Inhibited by 40% with 500 uM tyrosine, and a tyrosine concentration as high as 5 mM reduced activity to 5%. Its function is as follows. Catalyzes the Claisen rearrangement of chorismate to prephenate. Probably involved in the aromatic amino acid biosynthesis. The polypeptide is Chorismate mutase AroH (Thermus thermophilus).